Reading from the N-terminus, the 50-residue chain is Sperm protamine P1 (50 aa).

2 disulfides stabilise this stretch: C7/C15 and C38/C46.

Belongs to the protamine P1 family. Cross-linked by interchain disulfide bonds around the DNA-helix. As to expression, testis.

The protein resides in the nucleus. It is found in the chromosome. Protamines substitute for histones in the chromatin of sperm during the haploid phase of spermatogenesis. They compact sperm DNA into a highly condensed, stable and inactive complex. This is Sperm protamine P1 (PRM1) from Equus caballus (Horse).